A 199-amino-acid chain; its full sequence is Probable GTP-binding protein EngB (199 aa).

Residues Asp28 to Val199 form the EngB-type G domain. GTP-binding positions include Gly36–Ser43, Gly63–Leu67, Asp81–Gly84, Thr148–Asp151, and Phe180–Ser182. The Mg(2+) site is built by Ser43 and Thr65.

This sequence belongs to the TRAFAC class TrmE-Era-EngA-EngB-Septin-like GTPase superfamily. EngB GTPase family. The cofactor is Mg(2+).

Functionally, necessary for normal cell division and for the maintenance of normal septation. This chain is Probable GTP-binding protein EngB, found in Streptococcus pyogenes serotype M49 (strain NZ131).